A 465-amino-acid polypeptide reads, in one-letter code: ATP synthase subunit beta (465 aa).

152-159 (GGAGVGKT) is a binding site for ATP.

This sequence belongs to the ATPase alpha/beta chains family. In terms of assembly, F-type ATPases have 2 components, CF(1) - the catalytic core - and CF(0) - the membrane proton channel. CF(1) has five subunits: alpha(3), beta(3), gamma(1), delta(1), epsilon(1). CF(0) has three main subunits: a(1), b(2) and c(9-12). The alpha and beta chains form an alternating ring which encloses part of the gamma chain. CF(1) is attached to CF(0) by a central stalk formed by the gamma and epsilon chains, while a peripheral stalk is formed by the delta and b chains.

It localises to the cell inner membrane. It carries out the reaction ATP + H2O + 4 H(+)(in) = ADP + phosphate + 5 H(+)(out). In terms of biological role, produces ATP from ADP in the presence of a proton gradient across the membrane. The catalytic sites are hosted primarily by the beta subunits. This chain is ATP synthase subunit beta, found in Campylobacter fetus subsp. fetus (strain 82-40).